Consider the following 468-residue polypeptide: ATP synthase subunit beta (468 aa).

G148–T155 lines the ATP pocket.

This sequence belongs to the ATPase alpha/beta chains family. F-type ATPases have 2 components, CF(1) - the catalytic core - and CF(0) - the membrane proton channel. CF(1) has five subunits: alpha(3), beta(3), gamma(1), delta(1), epsilon(1). CF(0) has three main subunits: a(1), b(2) and c(9-12). The alpha and beta chains form an alternating ring which encloses part of the gamma chain. CF(1) is attached to CF(0) by a central stalk formed by the gamma and epsilon chains, while a peripheral stalk is formed by the delta and b chains.

It localises to the cell inner membrane. It catalyses the reaction ATP + H2O + 4 H(+)(in) = ADP + phosphate + 5 H(+)(out). Its function is as follows. Produces ATP from ADP in the presence of a proton gradient across the membrane. The catalytic sites are hosted primarily by the beta subunits. The polypeptide is ATP synthase subunit beta (Xanthomonas axonopodis pv. citri (strain 306)).